We begin with the raw amino-acid sequence, 307 residues long: Quinolinate synthase (307 aa).

Residues H23 and S40 each coordinate iminosuccinate. C86 provides a ligand contact to [4Fe-4S] cluster. Iminosuccinate-binding positions include Y112–N114 and S129. C173 is a binding site for [4Fe-4S] cluster. Residues H199–E201 and T216 each bind iminosuccinate. [4Fe-4S] cluster is bound at residue C265.

It belongs to the quinolinate synthase family. Type 2 subfamily. It depends on [4Fe-4S] cluster as a cofactor.

It is found in the cytoplasm. It catalyses the reaction iminosuccinate + dihydroxyacetone phosphate = quinolinate + phosphate + 2 H2O + H(+). The protein operates within cofactor biosynthesis; NAD(+) biosynthesis; quinolinate from iminoaspartate: step 1/1. Its function is as follows. Catalyzes the condensation of iminoaspartate with dihydroxyacetone phosphate to form quinolinate. This Methanocaldococcus jannaschii (strain ATCC 43067 / DSM 2661 / JAL-1 / JCM 10045 / NBRC 100440) (Methanococcus jannaschii) protein is Quinolinate synthase.